The chain runs to 814 residues: Acyl-coenzyme A dehydrogenase (814 aa).

The Proton acceptor role is filled by E497.

This sequence belongs to the acyl-CoA dehydrogenase family. It depends on FAD as a cofactor.

It catalyses the reaction a medium-chain 2,3-saturated fatty acyl-CoA + oxidized [electron-transfer flavoprotein] + H(+) = a medium-chain (2E)-enoyl-CoA + reduced [electron-transfer flavoprotein]. The catalysed reaction is a long-chain 2,3-saturated fatty acyl-CoA + oxidized [electron-transfer flavoprotein] + H(+) = a long-chain (2E)-enoyl-CoA + reduced [electron-transfer flavoprotein]. The protein operates within lipid metabolism; fatty acid beta-oxidation. Functionally, catalyzes the dehydrogenation of acyl-coenzymes A (acyl-CoAs) to 2-enoyl-CoAs, the first step of the beta-oxidation cycle of fatty acid degradation. Is required for S.typhimurium to utilize medium- and long-chain fatty acids as sole carbon sources for growth. Is needed for bacterial survival during carbone-source starvation. This Salmonella typhimurium (strain LT2 / SGSC1412 / ATCC 700720) protein is Acyl-coenzyme A dehydrogenase (fadE).